Reading from the N-terminus, the 348-residue chain is Probable dual-specificity RNA methyltransferase RlmN (348 aa).

Glu89 (proton acceptor) is an active-site residue. In terms of domain architecture, Radical SAM core spans 95-328 (HKNRNTVCVS…VTLRISYGSR (234 aa)). Cys102 and Cys333 are joined by a disulfide. 3 residues coordinate [4Fe-4S] cluster: Cys109, Cys113, and Cys116. S-adenosyl-L-methionine contacts are provided by residues 159-160 (GE), Ser191, 214-216 (SLH), and Asn290. The active-site S-methylcysteine intermediate is the Cys333.

Belongs to the radical SAM superfamily. RlmN family. [4Fe-4S] cluster serves as cofactor.

It localises to the cytoplasm. The enzyme catalyses adenosine(2503) in 23S rRNA + 2 reduced [2Fe-2S]-[ferredoxin] + 2 S-adenosyl-L-methionine = 2-methyladenosine(2503) in 23S rRNA + 5'-deoxyadenosine + L-methionine + 2 oxidized [2Fe-2S]-[ferredoxin] + S-adenosyl-L-homocysteine. It catalyses the reaction adenosine(37) in tRNA + 2 reduced [2Fe-2S]-[ferredoxin] + 2 S-adenosyl-L-methionine = 2-methyladenosine(37) in tRNA + 5'-deoxyadenosine + L-methionine + 2 oxidized [2Fe-2S]-[ferredoxin] + S-adenosyl-L-homocysteine. Functionally, specifically methylates position 2 of adenine 2503 in 23S rRNA and position 2 of adenine 37 in tRNAs. The sequence is that of Probable dual-specificity RNA methyltransferase RlmN from Dictyoglomus thermophilum (strain ATCC 35947 / DSM 3960 / H-6-12).